The following is a 291-amino-acid chain: 4-hydroxy-tetrahydrodipicolinate synthase (291 aa).

Residue Thr44 coordinates pyruvate. The Proton donor/acceptor role is filled by Tyr132. The active-site Schiff-base intermediate with substrate is Lys160. Ile202 is a binding site for pyruvate.

The protein belongs to the DapA family. As to quaternary structure, homotetramer; dimer of dimers.

The protein localises to the cytoplasm. It carries out the reaction L-aspartate 4-semialdehyde + pyruvate = (2S,4S)-4-hydroxy-2,3,4,5-tetrahydrodipicolinate + H2O + H(+). It functions in the pathway amino-acid biosynthesis; L-lysine biosynthesis via DAP pathway; (S)-tetrahydrodipicolinate from L-aspartate: step 3/4. Its function is as follows. Catalyzes the condensation of (S)-aspartate-beta-semialdehyde [(S)-ASA] and pyruvate to 4-hydroxy-tetrahydrodipicolinate (HTPA). The chain is 4-hydroxy-tetrahydrodipicolinate synthase from Syntrophus aciditrophicus (strain SB).